The primary structure comprises 528 residues: (R)-citramalate synthase (528 aa).

The 263-residue stretch at 4–266 (VKLYDTTLRD…RECIGDDQLR (263 aa)) folds into the Pyruvate carboxyltransferase domain.

It belongs to the alpha-IPM synthase/homocitrate synthase family.

The enzyme catalyses pyruvate + acetyl-CoA + H2O = (3R)-citramalate + CoA + H(+). It functions in the pathway amino-acid biosynthesis; L-isoleucine biosynthesis; 2-oxobutanoate from pyruvate: step 1/3. Its function is as follows. Catalyzes the condensation of pyruvate and acetyl-coenzyme A to form (R)-citramalate. Makes part of the main pathway for isoleucine biosynthesis in G.sulfurreducens, i.e. the citramalate-dependent pathway. The chain is (R)-citramalate synthase from Geobacter sulfurreducens (strain ATCC 51573 / DSM 12127 / PCA).